The following is a 454-amino-acid chain: L-cysteine desulfhydrase-like protein lolT1 (454 aa).

Lys227 carries the post-translational modification N6-(pyridoxal phosphate)lysine.

The protein belongs to the class-V pyridoxal-phosphate-dependent aminotransferase family. Pyridoxal 5'-phosphate is required as a cofactor.

It participates in alkaloid biosynthesis. Its function is as follows. L-cysteine desulfhydrase-like protein; part of the gene cluster that mediates the biosynthesis of loline alkaloids, potent insecticidal agents composed of a pyrrolizidine ring system and an uncommon ether bridge linking carbons 2 and 7. Lolines are structurally differentiated by the various modifications of the L-amino group and include norloline, loline, N-methylloline, N-acetylloline, N-acetylnorloline, and N-formylloline. The first committed step is the condensation of O-acetyl-L-homoserine (derived from L-aspartic acid) and L-proline, probably catalyzed by the gamma-type pyridoxal 5'-phosphate(PLP)-dependent enzyme lolC, to give the diamino diacid, NACPP. Ensuing cyclization, decarboxylation, and acetylation steps yield 1-exo-acetamidopyrrolizidine (AcAP). LolO is required for installation of the ether bridge upon the pathway intermediate, 1-exo-acetamidopyrrolizidine (AcAP). In sequential 2-oxoglutarate- and O(2)-consuming steps, lolO removes hydrogens from C2 and C7 of AcAP to form both carbon-oxygen bonds in N-acetylnorloline (NANL), the precursor to all other lolines. The enzymes lolD, lolE, lolF and lolT have also been proposed to be involved in the ether-bridge installation. Further processing of the exocyclic moiety of NANL by fungal N-acetamidase (LolN), methyltransferase (LolM), and cytochrome P450 (LolP) enzymes, with occasional involvement of a plant acetyltransferase, generates the other known lolines. LolN transforms NANL to norlonine which is monomethylated and dimethylated to respectively lonine and N-methyllonine (NML) by lolM. LolP catalyzes hydroxylation of the methyl group in N-methylloline (NML) and further oxygenation to N-formylloline (NFL). A plant acetyltransferase is responsible for the acetylation of loline to form N-acetylloline (NAL). LolA might interact with aspartate kinase to prevent feedback inhibition of its activity by these end products and thereby promote production of L-homoserine from L-aspartate. This is L-cysteine desulfhydrase-like protein lolT1 from Epichloe uncinata (Endophyte fungus).